A 743-amino-acid chain; its full sequence is Phosphoribosylformylglycinamidine synthase subunit PurL (743 aa).

The active site involves His-50. 2 residues coordinate ATP: Tyr-53 and Lys-92. Glu-94 is a binding site for Mg(2+). Substrate-binding positions include 95–98 (SHNH) and Arg-117. His-96 acts as the Proton acceptor in catalysis. Asp-118 is a binding site for Mg(2+). Gln-241 is a substrate binding site. Asp-269 is a binding site for Mg(2+). Position 313–315 (313–315 (ESQ)) interacts with substrate. ATP is bound by residues Asp-494 and Gly-531. Asn-532 lines the Mg(2+) pocket. Residue Ser-534 coordinates substrate.

Belongs to the FGAMS family. As to quaternary structure, monomer. Part of the FGAM synthase complex composed of 1 PurL, 1 PurQ and 2 PurS subunits.

The protein localises to the cytoplasm. It catalyses the reaction N(2)-formyl-N(1)-(5-phospho-beta-D-ribosyl)glycinamide + L-glutamine + ATP + H2O = 2-formamido-N(1)-(5-O-phospho-beta-D-ribosyl)acetamidine + L-glutamate + ADP + phosphate + H(+). It participates in purine metabolism; IMP biosynthesis via de novo pathway; 5-amino-1-(5-phospho-D-ribosyl)imidazole from N(2)-formyl-N(1)-(5-phospho-D-ribosyl)glycinamide: step 1/2. In terms of biological role, part of the phosphoribosylformylglycinamidine synthase complex involved in the purines biosynthetic pathway. Catalyzes the ATP-dependent conversion of formylglycinamide ribonucleotide (FGAR) and glutamine to yield formylglycinamidine ribonucleotide (FGAM) and glutamate. The FGAM synthase complex is composed of three subunits. PurQ produces an ammonia molecule by converting glutamine to glutamate. PurL transfers the ammonia molecule to FGAR to form FGAM in an ATP-dependent manner. PurS interacts with PurQ and PurL and is thought to assist in the transfer of the ammonia molecule from PurQ to PurL. The chain is Phosphoribosylformylglycinamidine synthase subunit PurL from Rhizobium meliloti (strain 1021) (Ensifer meliloti).